The following is an 885-amino-acid chain: Translation initiation factor IF-2 (885 aa).

The span at glutamate 123–isoleucine 232 shows a compositional bias: basic and acidic residues. The tract at residues glutamate 123 to methionine 289 is disordered. Residues glycine 253 to arginine 266 are compositionally biased toward basic residues. Residues glycine 267–glutamate 276 show a composition bias toward basic and acidic residues. The region spanning proline 385–lysine 554 is the tr-type G domain. Residues glycine 394–threonine 401 form a G1 region. Glycine 394–threonine 401 serves as a coordination point for GTP. The G2 stretch occupies residues glycine 419–histidine 423. Residues aspartate 440–glycine 443 form a G3 region. Residues aspartate 440–histidine 444 and asparagine 494–aspartate 497 contribute to the GTP site. The interval asparagine 494–aspartate 497 is G4. Residues serine 530 to lysine 532 form a G5 region.

This sequence belongs to the TRAFAC class translation factor GTPase superfamily. Classic translation factor GTPase family. IF-2 subfamily.

It is found in the cytoplasm. Its function is as follows. One of the essential components for the initiation of protein synthesis. Protects formylmethionyl-tRNA from spontaneous hydrolysis and promotes its binding to the 30S ribosomal subunits. Also involved in the hydrolysis of GTP during the formation of the 70S ribosomal complex. The protein is Translation initiation factor IF-2 of Shewanella oneidensis (strain ATCC 700550 / JCM 31522 / CIP 106686 / LMG 19005 / NCIMB 14063 / MR-1).